An 897-amino-acid polypeptide reads, in one-letter code: Pre-mRNA-splicing factor CWC22 homolog (897 aa).

Positions 1–10 are enriched in polar residues; that stretch reads MSSSRSQSPE. The tract at residues 1–155 is disordered; sequence MSSSRSQSPE…EKKKKEPLDI (155 aa). Basic and acidic residues-rich tracts occupy residues 36–54, 93–107, and 131–155; these read SSEK…REVS, RSKE…EKSP, and RSSE…PLDI. One can recognise an MIF4G domain in the interval 194-382; sequence KKKIHGLVNR…ETAMQIRKDK (189 aa). A disordered region spans residues 444–472; the sequence is NADISDEDGGDELDDEEEGSDVEEAPKKT. Residues 447–466 are compositionally biased toward acidic residues; it reads ISDEDGGDELDDEEEGSDVE. Residues 485–601 enclose the MI domain; the sequence is AFRREVYLTM…DWKILADMKM (117 aa). 2 stretches are compositionally biased toward low complexity: residues 689–710 and 720–730; these read LDQL…SDSS and DSSSDSSSSSE. Residues 689–897 form a disordered region; that stretch reads LDQLKAESSS…VESDDRRRRR (209 aa). A compositionally biased stretch (basic and acidic residues) spans 743 to 897; that stretch reads NSEESSKKKE…VESDDRRRRR (155 aa).

It belongs to the CWC22 family. In terms of tissue distribution, expressed in germ cells, oocytes, and sperm cells.

The protein localises to the nucleus. Its subcellular location is the nucleus speckle. Its function is as follows. Required for pre-mRNA splicing and for exon-junction complex (EJC) assembly. Hinders EIF4A3 from non-specifically binding RNA and escorts it to the splicing machinery to promote EJC assembly on mature mRNAs. Through its role in EJC assembly, required for nonsense-mediated mRNA decay. Plays a role in the nuclear retention of unspliced mRNAs. Plays a role in sex determination. Required for early embryogenesis and tissue differentiation. This is Pre-mRNA-splicing factor CWC22 homolog from Caenorhabditis elegans.